The chain runs to 165 residues: Large ribosomal subunit protein uL10 (165 aa).

Belongs to the universal ribosomal protein uL10 family. As to quaternary structure, part of the ribosomal stalk of the 50S ribosomal subunit. The N-terminus interacts with L11 and the large rRNA to form the base of the stalk. The C-terminus forms an elongated spine to which L12 dimers bind in a sequential fashion forming a multimeric L10(L12)X complex.

In terms of biological role, forms part of the ribosomal stalk, playing a central role in the interaction of the ribosome with GTP-bound translation factors. The sequence is that of Large ribosomal subunit protein uL10 from Pectobacterium atrosepticum (strain SCRI 1043 / ATCC BAA-672) (Erwinia carotovora subsp. atroseptica).